We begin with the raw amino-acid sequence, 118 residues long: uncharacterized protein (118 aa).

3 helical membrane-spanning segments follow: residues 17 to 37 (IIII…FAIL), 60 to 80 (INYT…IMIF), and 90 to 110 (YIEQ…GSFW).

The protein resides in the membrane. This is an uncharacterized protein from Acanthamoeba polyphaga mimivirus (APMV).